The primary structure comprises 327 residues: Fumigatonoid B endoperoxide isomerase nvfE (327 aa).

The interval 1–22 is disordered; the sequence is MGRDQVSHKRSQNSNVSEIPDL. 3 residues coordinate Fe cation: H152, D154, and H234.

The protein belongs to the PhyH family. Homodimer. It depends on Fe cation as a cofactor.

The enzyme catalyses fumigatonoid B = fumigatonoid C. It participates in secondary metabolite biosynthesis; terpenoid biosynthesis. In terms of biological role, fumigatonoid B endoperoxide isomerase; part of the gene cluster that mediates the biosynthesis of novofumigatonin, a heavily oxygenated meroterpenoid containing a unique orthoester moiety. The first step of the pathway is the synthesis of 3,5-dimethylorsellinic acid (DMOA) by the polyketide synthase nvfA via condensation of one acetyl-CoA starter unit with 3 malonyl-CoA units and 2 methylations. DMOA is then converted to farnesyl-DMOA by the farnesyltransferase nvfB. Epoxydation by FAD-dependent monooxygenase nvfK, followed by a protonation-initiated cyclization catalyzed by the terpene cyclase nvfL leads to the production of asnavolin H. The short chain dehydrogenase nvfC then as a 3-OH dehydrogenase of asnovolin H to yield chemesin D. There are two branches to synthesize asnovolin A from chemesin D. In one branch, chemesin D undergoes Baeyer-Villiger oxidation by nvfH, methylation by nvfJ, and enoyl reduction by the nvfM D enoylreductase that reduces the double bond between C-5'and C-6', to form respectively asnovolin I, asnovolin K, and asnovolin A. In the other branch, the methylation precedes the Baeyer-Villiger oxidation and the enoyl reduction to yield asnovolin A via the asnovolin J intermediate. Asnovolin A is further converted to fumigatonoid A by the Fe(II)/2-oxoglutarate-dependent dioxygenase nvfI that catalyzes an endoperoxidation reaction. The alpha/beta hydrolase nvfD then acts as an epimerase that converts fumigatonoid A to its C-5' epimer, which then undergoes spontaneous or nvfD-catalyzed lactonization. The following step utilizes the ketoreductase nvfG to produce fumigatonoid B. The dioxygenase nvfE further converts fumigatonoid B into fumigatonoid C. Finally the Fe(II)/2-oxoglutarate-dependent dioxygenase nvfF catalyzes two rounds of oxidation to transform fumigatonoid C into the end product, novofumigatonin A. The protein is Fumigatonoid B endoperoxide isomerase nvfE of Aspergillus novofumigatus (strain IBT 16806).